A 367-amino-acid polypeptide reads, in one-letter code: Aminomethyltransferase (367 aa).

It belongs to the GcvT family. In terms of assembly, the glycine cleavage system is composed of four proteins: P, T, L and H.

The enzyme catalyses N(6)-[(R)-S(8)-aminomethyldihydrolipoyl]-L-lysyl-[protein] + (6S)-5,6,7,8-tetrahydrofolate = N(6)-[(R)-dihydrolipoyl]-L-lysyl-[protein] + (6R)-5,10-methylene-5,6,7,8-tetrahydrofolate + NH4(+). Functionally, the glycine cleavage system catalyzes the degradation of glycine. This chain is Aminomethyltransferase, found in Mycobacterium avium (strain 104).